Reading from the N-terminus, the 371-residue chain is Bifunctional enzyme IspD/IspF (371 aa).

The interval 1-214 (MNSCFIILAG…NSDIKFNNLI (214 aa)) is 2-C-methyl-D-erythritol 4-phosphate cytidylyltransferase. The segment at 215-371 (KFGIGFDVHR…EVIASVIKND (157 aa)) is 2-C-methyl-D-erythritol 2,4-cyclodiphosphate synthase. Residues Asp221 and His223 each contribute to the a divalent metal cation site. 4-CDP-2-C-methyl-D-erythritol 2-phosphate-binding positions include 221–223 (DVH) and 247–248 (HS). Residue His255 participates in a divalent metal cation binding. Residues 269–271 (DIG), 274–278 (FSDKN), and Lys355 each bind 4-CDP-2-C-methyl-D-erythritol 2-phosphate.

It in the N-terminal section; belongs to the IspD/TarI cytidylyltransferase family. IspD subfamily. In the C-terminal section; belongs to the IspF family. It depends on a divalent metal cation as a cofactor.

The catalysed reaction is 2-C-methyl-D-erythritol 4-phosphate + CTP + H(+) = 4-CDP-2-C-methyl-D-erythritol + diphosphate. It carries out the reaction 4-CDP-2-C-methyl-D-erythritol 2-phosphate = 2-C-methyl-D-erythritol 2,4-cyclic diphosphate + CMP. The protein operates within isoprenoid biosynthesis; isopentenyl diphosphate biosynthesis via DXP pathway; isopentenyl diphosphate from 1-deoxy-D-xylulose 5-phosphate: step 2/6. It participates in isoprenoid biosynthesis; isopentenyl diphosphate biosynthesis via DXP pathway; isopentenyl diphosphate from 1-deoxy-D-xylulose 5-phosphate: step 4/6. In terms of biological role, bifunctional enzyme that catalyzes the formation of 4-diphosphocytidyl-2-C-methyl-D-erythritol from CTP and 2-C-methyl-D-erythritol 4-phosphate (MEP) (IspD), and catalyzes the conversion of 4-diphosphocytidyl-2-C-methyl-D-erythritol 2-phosphate (CDP-ME2P) to 2-C-methyl-D-erythritol 2,4-cyclodiphosphate (ME-CPP) with a corresponding release of cytidine 5-monophosphate (CMP) (IspF). The chain is Bifunctional enzyme IspD/IspF from Pelagibacter ubique (strain HTCC1062).